The primary structure comprises 354 residues: S-adenosylmethionine:tRNA ribosyltransferase-isomerase (354 aa).

It belongs to the QueA family. Monomer.

Its subcellular location is the cytoplasm. The enzyme catalyses 7-aminomethyl-7-carbaguanosine(34) in tRNA + S-adenosyl-L-methionine = epoxyqueuosine(34) in tRNA + adenine + L-methionine + 2 H(+). It participates in tRNA modification; tRNA-queuosine biosynthesis. In terms of biological role, transfers and isomerizes the ribose moiety from AdoMet to the 7-aminomethyl group of 7-deazaguanine (preQ1-tRNA) to give epoxyqueuosine (oQ-tRNA). The sequence is that of S-adenosylmethionine:tRNA ribosyltransferase-isomerase from Salmonella paratyphi C (strain RKS4594).